The primary structure comprises 274 residues: Acetyl-coenzyme A carboxylase carboxyl transferase subunit alpha (274 aa).

The CoA carboxyltransferase C-terminal domain occupies 2-250; sequence NKEFIKSIVV…KKELMNAMNE (249 aa).

It belongs to the AccA family. As to quaternary structure, acetyl-CoA carboxylase is a heterohexamer composed of biotin carboxyl carrier protein (AccB), biotin carboxylase (AccC) and two subunits each of ACCase subunit alpha (AccA) and ACCase subunit beta (AccD).

The protein resides in the cytoplasm. The enzyme catalyses N(6)-carboxybiotinyl-L-lysyl-[protein] + acetyl-CoA = N(6)-biotinyl-L-lysyl-[protein] + malonyl-CoA. It participates in lipid metabolism; malonyl-CoA biosynthesis; malonyl-CoA from acetyl-CoA: step 1/1. Functionally, component of the acetyl coenzyme A carboxylase (ACC) complex. First, biotin carboxylase catalyzes the carboxylation of biotin on its carrier protein (BCCP) and then the CO(2) group is transferred by the carboxyltransferase to acetyl-CoA to form malonyl-CoA. In Clostridium botulinum (strain Eklund 17B / Type B), this protein is Acetyl-coenzyme A carboxylase carboxyl transferase subunit alpha.